The chain runs to 262 residues: Endoplasmic reticulum chaperone BiP (262 aa).

Residue Gly8–Arg11 coordinates ATP. The interval Gln53–Val63 is interdomain linker. The interval Cys64–Thr144 is substrate-binding (SBD). Lys91 is modified (N6-succinyllysine). At Arg136 the chain carries Omega-N-methylarginine. Position 162 is an O-AMP-threonine; alternate (Thr162). At Thr162 the chain carries Phosphothreonine; alternate. An N6,N6,N6-trimethyllysine; by METTL21A; in vitro modification is found at Lys229. Lys229 carries the post-translational modification N6,N6-dimethyllysine; alternate. Lys229 carries the N6-methyllysine; alternate modification. N6-methyllysine is present on Lys235.

It belongs to the heat shock protein 70 family. In terms of assembly, monomer and homooligomer; homooligomerization via the interdomain linker inactivates the chaperone activity and acts as a storage of HSPA5/BiP molecules. Interacts with DNAJC1 (via J domain). Component of an EIF2 complex at least composed of CELF1/CUGBP1, CALR, CALR3, EIF2S1, EIF2S2, HSP90B1 and HSPA5. Part of a large chaperone multiprotein complex comprising DNAJB11, HSP90B1, HSPA5, HYOU, PDIA2, PDIA4, PDIA6, PPIB, SDF2L1, UGGT1 and very small amounts of ERP29, but not, or at very low levels, CALR nor CANX. Interacts with TMEM132A and TRIM21. May form a complex with ERLEC1, OS9, SEL1L and SYVN1. Interacts with DNAJC10. Interacts with DNAJB9/ERdj4; leading to recruit HSPA5/BiP to ERN1/IRE1. Interacts with ERN1/IRE1 (via luminal domain); the interaction takes place following interaction with DNAJB9/ERdj4 and leads to inactivate ERN1/IRE1, the interaction also competitively inhibits ERN1 interaction with MANF. Interacts directly with MANF (via SAP domain); the interaction inhibits ATP binding to HSPA5/BiP and subsequent nucleotide exchange. Interacts with EIF2AK3/PERK (via luminal domain); interaction leads to inactivate EIF2AK3/PERK. Interacts with MX1. Interacts with METTL23. Interacts with CEMIP; the interaction induces calcium leakage from the endoplasmic reticulum and cell migration. Interacts with PCSK4 form; the interaction takes place in the endoplasmic reticulum. Interacts with CIPC. Interacts with CCDC88B (via C-terminus); the interaction opposes ERN1-mediated JNK activation, protecting against apoptosis. Interacts with INPP5K; necessary for INPP5K localization at the endoplasmic reticulum. Interacts with MANF; the interaction is direct. Interacts with LOXL2; leading to activate the ERN1/IRE1-XBP1 pathway of the unfolded protein response. Interacts with CLU under stressed condition; interaction increases CLU protein stability; facilitates its retrotranslocation and redistribution to the mitochondria; cooperatively suppress stress-induced apoptosis by stabilizing mitochondrial membrane integrity. Interacts with CCDC47. Interacts with CLN3. Interacts with ELAPOR1; may regulate the function of HSPA5 in apoptosis and cell proliferation. Interacts with CASP7. Interacts with ILDR2; the interaction stabilizes ILDR2 expression. Interacts with ADAM7. In unstressed cells, AMPylation at Thr-162 by FICD inactivates the chaperome activity: AMPylated form is locked in a relatively inert state and only weakly stimulated by J domain-containing proteins. In response to endoplasmic reticulum stress, de-AMPylation by the same protein, FICD, restores the chaperone activity.

It is found in the endoplasmic reticulum lumen. Its subcellular location is the melanosome. The protein resides in the cytoplasm. It localises to the cell surface. It catalyses the reaction ATP + H2O = ADP + phosphate + H(+). With respect to regulation, the chaperone activity is regulated by ATP-induced allosteric coupling of the nucleotide-binding (NBD) and substrate-binding (SBD) domains. In the ADP-bound and nucleotide-free (apo) states, the two domains have little interaction. In contrast, in the ATP-bound state the two domains are tightly coupled, which results in drastically accelerated kinetics in both binding and release of polypeptide substrates. J domain-containing co-chaperones (DNAJB9/ERdj4 or DNAJC10/ERdj5) stimulate the ATPase activity and are required for efficient substrate recognition by HSPA5/BiP. Homooligomerization inactivates participating HSPA5/BiP protomers and probably act as reservoirs to store HSPA5/BiP molecules when they are not needed by the cell. Its function is as follows. Endoplasmic reticulum chaperone that plays a key role in protein folding and quality control in the endoplasmic reticulum lumen. Involved in the correct folding of proteins and degradation of misfolded proteins via its interaction with DNAJC10/ERdj5, probably to facilitate the release of DNAJC10/ERdj5 from its substrate. Acts as a key repressor of the EIF2AK3/PERK and ERN1/IRE1-mediated unfolded protein response (UPR). In the unstressed endoplasmic reticulum, recruited by DNAJB9/ERdj4 to the luminal region of ERN1/IRE1, leading to disrupt the dimerization of ERN1/IRE1, thereby inactivating ERN1/IRE1. Also binds and inactivates EIF2AK3/PERK in unstressed cells. Accumulation of misfolded protein in the endoplasmic reticulum causes release of HSPA5/BiP from ERN1/IRE1 and EIF2AK3/PERK, allowing their homodimerization and subsequent activation. Plays an auxiliary role in post-translational transport of small presecretory proteins across endoplasmic reticulum (ER). May function as an allosteric modulator for SEC61 channel-forming translocon complex, likely cooperating with SEC62 to enable the productive insertion of these precursors into SEC61 channel. Appears to specifically regulate translocation of precursors having inhibitory residues in their mature region that weaken channel gating. May also play a role in apoptosis and cell proliferation. The polypeptide is Endoplasmic reticulum chaperone BiP (Sus scrofa (Pig)).